A 453-amino-acid chain; its full sequence is Ribosomal protein uS12 methylthiotransferase RimO (453 aa).

An MTTase N-terminal domain is found at Pro5 to Pro120. The [4Fe-4S] cluster site is built by Cys14, Cys50, Cys79, Cys151, Cys155, and Cys158. The Radical SAM core domain maps to Leu137 to Asn382. Positions Gln385–Val453 constitute a TRAM domain.

It belongs to the methylthiotransferase family. RimO subfamily. Requires [4Fe-4S] cluster as cofactor.

The protein resides in the cytoplasm. The enzyme catalyses L-aspartate(89)-[ribosomal protein uS12]-hydrogen + (sulfur carrier)-SH + AH2 + 2 S-adenosyl-L-methionine = 3-methylsulfanyl-L-aspartate(89)-[ribosomal protein uS12]-hydrogen + (sulfur carrier)-H + 5'-deoxyadenosine + L-methionine + A + S-adenosyl-L-homocysteine + 2 H(+). Its function is as follows. Catalyzes the methylthiolation of an aspartic acid residue of ribosomal protein uS12. The chain is Ribosomal protein uS12 methylthiotransferase RimO from Burkholderia orbicola (strain MC0-3).